The sequence spans 364 residues: UDP-N-acetylglucosamine--N-acetylmuramyl-(pentapeptide) pyrophosphoryl-undecaprenol N-acetylglucosamine transferase (364 aa).

Residues 10–12 (TGG), N124, R165, S193, I248, and Q293 contribute to the UDP-N-acetyl-alpha-D-glucosamine site.

It belongs to the glycosyltransferase 28 family. MurG subfamily.

The protein localises to the cell inner membrane. It carries out the reaction di-trans,octa-cis-undecaprenyl diphospho-N-acetyl-alpha-D-muramoyl-L-alanyl-D-glutamyl-meso-2,6-diaminopimeloyl-D-alanyl-D-alanine + UDP-N-acetyl-alpha-D-glucosamine = di-trans,octa-cis-undecaprenyl diphospho-[N-acetyl-alpha-D-glucosaminyl-(1-&gt;4)]-N-acetyl-alpha-D-muramoyl-L-alanyl-D-glutamyl-meso-2,6-diaminopimeloyl-D-alanyl-D-alanine + UDP + H(+). The protein operates within cell wall biogenesis; peptidoglycan biosynthesis. Functionally, cell wall formation. Catalyzes the transfer of a GlcNAc subunit on undecaprenyl-pyrophosphoryl-MurNAc-pentapeptide (lipid intermediate I) to form undecaprenyl-pyrophosphoryl-MurNAc-(pentapeptide)GlcNAc (lipid intermediate II). The chain is UDP-N-acetylglucosamine--N-acetylmuramyl-(pentapeptide) pyrophosphoryl-undecaprenol N-acetylglucosamine transferase from Geobacter sulfurreducens (strain ATCC 51573 / DSM 12127 / PCA).